Here is an 84-residue protein sequence, read N- to C-terminus: Small ribosomal subunit protein uS17 (84 aa).

The protein belongs to the universal ribosomal protein uS17 family. In terms of assembly, part of the 30S ribosomal subunit.

Functionally, one of the primary rRNA binding proteins, it binds specifically to the 5'-end of 16S ribosomal RNA. The sequence is that of Small ribosomal subunit protein uS17 from Clostridium beijerinckii (strain ATCC 51743 / NCIMB 8052) (Clostridium acetobutylicum).